Consider the following 345-residue polypeptide: Probable deoxyhypusine synthase 2 (345 aa).

Lys292 (nucleophile) is an active-site residue.

This sequence belongs to the deoxyhypusine synthase family. NAD(+) is required as a cofactor.

The enzyme catalyses [eIF5A protein]-L-lysine + spermidine = [eIF5A protein]-deoxyhypusine + propane-1,3-diamine. The protein operates within protein modification; eIF5A hypusination. In terms of biological role, catalyzes the NAD-dependent oxidative cleavage of spermidine and the subsequent transfer of the butylamine moiety of spermidine to the epsilon-amino group of a specific lysine residue of the eIF-5A precursor protein to form the intermediate deoxyhypusine residue. The chain is Probable deoxyhypusine synthase 2 (dys2) from Methanosarcina mazei (strain ATCC BAA-159 / DSM 3647 / Goe1 / Go1 / JCM 11833 / OCM 88) (Methanosarcina frisia).